The chain runs to 89 residues: Small ribosomal subunit protein uS15 (89 aa).

The protein belongs to the universal ribosomal protein uS15 family. In terms of assembly, part of the 30S ribosomal subunit. Forms a bridge to the 50S subunit in the 70S ribosome, contacting the 23S rRNA.

One of the primary rRNA binding proteins, it binds directly to 16S rRNA where it helps nucleate assembly of the platform of the 30S subunit by binding and bridging several RNA helices of the 16S rRNA. In terms of biological role, forms an intersubunit bridge (bridge B4) with the 23S rRNA of the 50S subunit in the ribosome. The chain is Small ribosomal subunit protein uS15 from Desulforudis audaxviator (strain MP104C).